Here is a 107-residue protein sequence, read N- to C-terminus: UPF0060 membrane protein mll7841 (107 aa).

4 helical membrane passes run 4 to 24 (LFYT…WAWW), 30 to 50 (PLWL…LALV), 60 to 80 (AAYG…VEGV), and 87 to 107 (LAGA…PRGA).

It belongs to the UPF0060 family.

It localises to the cell inner membrane. This Mesorhizobium japonicum (strain LMG 29417 / CECT 9101 / MAFF 303099) (Mesorhizobium loti (strain MAFF 303099)) protein is UPF0060 membrane protein mll7841.